The sequence spans 241 residues: Hybrid peroxiredoxin hyPrx5 (241 aa).

Residues 3–167 (SMEGKKVPQV…MLKYLAPQHQ (165 aa)) form the Thioredoxin domain. The active-site Cysteine sulfenic acid (-SOH) intermediate; for peroxiredoxin activity is Cys49. Positions 170–241 (ESISIFTKPG…GSDDLEKYFA (72 aa)) constitute a Glutaredoxin domain. A disulfide bond links Cys180 and Cys183.

It in the N-terminal section; belongs to the peroxiredoxin family. Prx5 subfamily. This sequence in the C-terminal section; belongs to the glutaredoxin family. Homotetramer; interconnecting Prx and Grx domains of different monomers.

The catalysed reaction is a hydroperoxide + 2 glutathione = an alcohol + glutathione disulfide + H2O. Its function is as follows. Thiol-specific peroxidase that catalyzes the reduction of hydrogen peroxide and organic hydroperoxides to water and alcohols, respectively. Plays a role in cell protection against oxidative stress by detoxifying peroxides. The polypeptide is Hybrid peroxiredoxin hyPrx5 (PGdx) (Haemophilus influenzae (strain ATCC 51907 / DSM 11121 / KW20 / Rd)).